Here is a 141-residue protein sequence, read N- to C-terminus: Galactose-6-phosphate isomerase subunit LacA 1 (141 aa).

It belongs to the LacAB/RpiB family. As to quaternary structure, heteromultimeric protein consisting of LacA and LacB.

It carries out the reaction aldehydo-D-galactose 6-phosphate = keto-D-tagatose 6-phosphate. It participates in carbohydrate metabolism; D-galactose 6-phosphate degradation; D-tagatose 6-phosphate from D-galactose 6-phosphate: step 1/1. This chain is Galactose-6-phosphate isomerase subunit LacA 1, found in Streptococcus pyogenes serotype M18 (strain MGAS8232).